The following is a 419-amino-acid chain: Tyrosine--tRNA ligase 2 (419 aa).

Tyr-34 provides a ligand contact to L-tyrosine. The short motif at 39-48 (PTGDSMHIGH) is the 'HIGH' region element. Residues Tyr-168 and Gln-172 each coordinate L-tyrosine. Positions 230 to 234 (KFGKS) match the 'KMSKS' region motif. Lys-233 contributes to the ATP binding site. Positions 352-418 (KNIVEWLVDL…GKKNYSLVKL (67 aa)) constitute an S4 RNA-binding domain.

This sequence belongs to the class-I aminoacyl-tRNA synthetase family. TyrS type 1 subfamily. Homodimer.

It localises to the cytoplasm. It catalyses the reaction tRNA(Tyr) + L-tyrosine + ATP = L-tyrosyl-tRNA(Tyr) + AMP + diphosphate + H(+). In terms of biological role, catalyzes the attachment of tyrosine to tRNA(Tyr) in a two-step reaction: tyrosine is first activated by ATP to form Tyr-AMP and then transferred to the acceptor end of tRNA(Tyr). The sequence is that of Tyrosine--tRNA ligase 2 from Bacillus thuringiensis subsp. konkukian (strain 97-27).